Consider the following 549-residue polypeptide: Oxygen-dependent choline dehydrogenase (549 aa).

4–33 (DFVIIGSGSAGSAMASRLSEDGKHTVIVLE) is an FAD binding site. His465 functions as the Proton acceptor in the catalytic mechanism.

This sequence belongs to the GMC oxidoreductase family. Requires FAD as cofactor.

The catalysed reaction is choline + A = betaine aldehyde + AH2. It carries out the reaction betaine aldehyde + NAD(+) + H2O = glycine betaine + NADH + 2 H(+). The protein operates within amine and polyamine biosynthesis; betaine biosynthesis via choline pathway; betaine aldehyde from choline (cytochrome c reductase route): step 1/1. Involved in the biosynthesis of the osmoprotectant glycine betaine. Catalyzes the oxidation of choline to betaine aldehyde and betaine aldehyde to glycine betaine at the same rate. The chain is Oxygen-dependent choline dehydrogenase from Rhizobium rhizogenes (strain K84 / ATCC BAA-868) (Agrobacterium radiobacter).